The sequence spans 204 residues: GATA transcription factor 14 (204 aa).

The segment covering 57–66 (REFDTNDSKP) has biased composition (basic and acidic residues). Residues 57–102 (REFDTNDSKPSRNFSNLPTATRGRLHAPKRSGNKRGRQKRLSFKSP) are disordered. A compositionally biased stretch (basic residues) spans 79–98 (GRLHAPKRSGNKRGRQKRLS). The segment at 111–165 (GITDKSCSHCGTRKTPLWREGPRGAGTLCNACGMRYRTGRLLPEYRPASSPDFKP) adopts a GATA-type zinc-finger fold. The disordered stretch occupies residues 180 to 204 (RERKSSPPNSFGFSESYHSTRKLGF). Residues 185 to 196 (SPPNSFGFSESY) are compositionally biased toward polar residues.

Belongs to the type IV zinc-finger family. Class A subfamily.

The protein resides in the nucleus. Its function is as follows. Transcriptional activator that specifically binds 5'-GATA-3' or 5'-GAT-3' motifs within gene promoters. May be involved in the regulation of some light-responsive genes. This is GATA transcription factor 14 (GATA14) from Arabidopsis thaliana (Mouse-ear cress).